A 163-amino-acid chain; its full sequence is Retinoic acid receptor responder protein 2 (163 aa).

A signal peptide spans 1–20 (MRRLLIPLALWLGAVGVGVA). 3 cysteine pairs are disulfide-bonded: Cys77/Cys87, Cys98/Cys117, and Cys101/Cys135. Positions 158–163 (KALPRS) are excised as a propeptide.

Secreted in an inactive precursor form, prochemerin, which is proteolytically processed by a variety of extracellular proteases to generate forms with differing levels of bioactivity. For example, the removal of six amino acids results in chemerin-157, which exhibits the highest activity, while removal of seven amino acids results in chemerin-156 which has slightly less activity. Some proteases are able to cleave at more than one site and chemerin forms may be sequentially processed by different enzymes to modulate activity levels. The coordinated expression and activity of chemerin-modifying enzymes is essential for regulating its bioactivation, inactivation and, consequently, biological function. Cathepsin G cleaves seven C-terminal amino acids from prochemerin (chemerin-156), elastase is able to cleave six (chemerin-157), eight (chemerin-155) or eleven (chemerin-152), plasmin cleaves five amino acids (chemerin-158), and tryptase cleaves five (chemerin-158) or eight (chemerin-155). Multiple cleavages might be required to fully activate chemerin, with an initial tryptase cleavage resulting in chemerin with low activity (chemerin-158), and a second cleavage by carboxypeptidase N or B producing highly active chemerin (chemerin-157). As to expression, expressed at the highest levels in placenta, liver, and white adipose tissue (WAT), and to a lesser extent in many other tissues such as lung, brown adipose tissue, heart, ovary, kidney, skeletal muscle and pancreas. Within WAT, expression is enriched in adipocytes as compared to the stromal vascular fraction. Expression and secretion increases dramatically with adipogenesis. Highly expressed in skin (basal and suprabasal layers of the epidermis, hair follicles and endothelial cells). Expression is elevated in numerous metabolic and inflammatory diseases including psoriasis, obesity, type 2 diabetes, metabolic syndrome and cardiovascular disease.

Its subcellular location is the secreted. In terms of biological role, adipocyte-secreted protein (adipokine) that regulates adipogenesis, metabolism and inflammation through activation of the chemokine-like receptor 1 (CMKLR1). Also acts as a ligand for CMKLR2. Can also bind to C-C chemokine receptor-like 2 (CCRL2), but with a lower affinity than it does to CMKLR1 or CMKLR2. Positively regulates adipocyte differentiation, modulates the expression of adipocyte genes involved in lipid and glucose metabolism and might play a role in angiogenesis, a process essential for the expansion of white adipose tissue. Also acts as a pro-inflammatory adipokine, causing an increase in secretion of pro-inflammatory and prodiabetic adipokines, which further impair adipose tissue metabolic function and have negative systemic effects including impaired insulin sensitivity, altered glucose and lipid metabolism, and a decrease in vascular function in other tissues. Can have both pro- and anti-inflammatory properties depending on the modality of enzymatic cleavage by different classes of proteases. Acts as a chemotactic factor for leukocyte populations expressing CMKLR1, particularly immature plasmacytoid dendritic cells, but also immature myeloid DCs, macrophages and natural killer cells. Exerts an anti-inflammatory role by preventing TNF/TNFA-induced VCAM1 expression and monocytes adhesion in vascular endothelial cells. The effect is mediated via inhibiting activation of NF-kappa-B and CRK/p38 through stimulation of AKT1/NOS3 signaling and nitric oxide production. Its dual role in inflammation and metabolism might provide a link between chronic inflammation and obesity, as well as obesity-related disorders such as type 2 diabetes and cardiovascular disease. Exhibits an antimicrobial function in the skin. The polypeptide is Retinoic acid receptor responder protein 2 (RARRES2) (Homo sapiens (Human)).